The following is a 380-amino-acid chain: Lipid-A-disaccharide synthase (380 aa).

This sequence belongs to the LpxB family.

The catalysed reaction is a lipid X + a UDP-2-N,3-O-bis[(3R)-3-hydroxyacyl]-alpha-D-glucosamine = a lipid A disaccharide + UDP + H(+). Its pathway is bacterial outer membrane biogenesis; LPS lipid A biosynthesis. Its function is as follows. Condensation of UDP-2,3-diacylglucosamine and 2,3-diacylglucosamine-1-phosphate to form lipid A disaccharide, a precursor of lipid A, a phosphorylated glycolipid that anchors the lipopolysaccharide to the outer membrane of the cell. This Pseudomonas syringae pv. syringae (strain B728a) protein is Lipid-A-disaccharide synthase.